Here is a 503-residue protein sequence, read N- to C-terminus: Cytochrome P450 3A29 (503 aa).

Position 442 (Cys-442) interacts with heme.

The protein belongs to the cytochrome P450 family. It depends on heme as a cofactor.

It is found in the endoplasmic reticulum membrane. Its subcellular location is the microsome membrane. The catalysed reaction is an organic molecule + reduced [NADPH--hemoprotein reductase] + O2 = an alcohol + oxidized [NADPH--hemoprotein reductase] + H2O + H(+). Its function is as follows. Cytochromes P450 are a group of heme-thiolate monooxygenases. In liver microsomes, this enzyme is involved in an NADPH-dependent electron transport pathway. It oxidizes a variety of structurally unrelated compounds, including steroids, fatty acids, and xenobiotics. The polypeptide is Cytochrome P450 3A29 (CYP3A29) (Sus scrofa (Pig)).